We begin with the raw amino-acid sequence, 340 residues long: Sodium/bile acid cotransporter 7 (340 aa).

Over 1–10 (MRLLERARKE) the chain is Cytoplasmic. A helical membrane pass occupies residues 11–31 (WFMVGIVVAIGAAKLEPSVGV). At 32 to 37 (NGGPLK) the chain is on the extracellular side. Residues 38–58 (PEITVSYIAVATIFFNSGLSL) traverse the membrane as a helical segment. Residues 59-71 (KTEELTSALVHLR) lie on the Cytoplasmic side of the membrane. A helical transmembrane segment spans residues 72 to 92 (LHLFIQIFTLAFFPAAIWLFL). Over 93–116 (QLLSVTSINEWLLKGLQTVGCMPP) the chain is Extracellular. Residues 117–137 (PVSSAVILTKAVGGNEAAAIF) form a helical membrane-spanning segment. A topological domain (cytoplasmic) is located at residue asparagine 138. The chain crosses the membrane as a helical span at residues 139 to 159 (SAFGSFLGIVVTPVLLLLFLG). At 160–163 (SSSS) the chain is on the extracellular side. A helical transmembrane segment spans residues 164 to 184 (VPFTSIFSQLFMTVVVPLVIG). The Cytoplasmic portion of the chain corresponds to 185–201 (QIVRRYIKDWLERKKPP). Residues 202–222 (FGVVSSSVLLMIIYTTFCDTF) form a helical membrane-spanning segment. Over 223-234 (SNPNIDLDKFSL) the chain is Extracellular. A helical membrane pass occupies residues 235–255 (ILILFIIVSVQLSFMLLTFIF). The Cytoplasmic portion of the chain corresponds to 256-270 (STRNNSGFTPADTVA). Residues 271 to 291 (IIFCSTHKSLTLGIPMLKIVF) traverse the membrane as a helical segment. At 292 to 298 (AGHEHLS) the chain is on the extracellular side. Residues 299-319 (LISVPLLIYHPAQILLGSVLV) form a helical membrane-spanning segment. Residues 320–340 (PTIKSWMVSRQKGVKLTRPTV) are Cytoplasmic-facing.

Belongs to the bile acid:sodium symporter (BASS) (TC 2.A.28) family. Expressed in heart, brain, colon, lung, liver, adrenal gland, stomach and ovary. Also expressed weakly in small intestine. Expressed in skeletal tissues.

It is found in the cell membrane. It localises to the endoplasmic reticulum membrane. The protein resides in the golgi apparatus membrane. Its function is as follows. Involved in teeth and skeletal development. Has an essential role in the biosynthesis and trafficking of glycosaminoglycans and glycoproteins to produce a proper functioning extracellular matrix. Required for extracellular matrix mineralization. Also involved in the regulation of cellular calcium homeostasis. Does not show transport activity towards bile acids or steroid sulfates (including taurocholate, cholate, chenodeoxycholate, estrone-3-sulfate, dehydroepiandrosterone sulfate (DHEAS) and pregnenolone sulfate). In Mus musculus (Mouse), this protein is Sodium/bile acid cotransporter 7 (Slc10a7).